A 394-amino-acid chain; its full sequence is Elongation factor Tu 2 (394 aa).

The 196-residue stretch at 9–204 (KPHCNIGTIG…SIDDYIPQPT (196 aa)) folds into the tr-type G domain. The segment at 18 to 25 (GHVDHGKT) is G1. 18–25 (GHVDHGKT) provides a ligand contact to GTP. Thr-25 serves as a coordination point for Mg(2+). The G2 stretch occupies residues 61–65 (GITIQ). The interval 82 to 85 (DCPG) is G3. Residues 82–86 (DCPGH) and 137–140 (NKID) contribute to the GTP site. The G4 stretch occupies residues 137–140 (NKID). The segment at 174-176 (SAL) is G5.

This sequence belongs to the TRAFAC class translation factor GTPase superfamily. Classic translation factor GTPase family. EF-Tu/EF-1A subfamily. As to quaternary structure, monomer.

The protein resides in the cytoplasm. It carries out the reaction GTP + H2O = GDP + phosphate + H(+). GTP hydrolase that promotes the GTP-dependent binding of aminoacyl-tRNA to the A-site of ribosomes during protein biosynthesis. This is Elongation factor Tu 2 from Orientia tsutsugamushi (strain Boryong) (Rickettsia tsutsugamushi).